The chain runs to 209 residues: Uracil phosphoribosyltransferase (209 aa).

5-phospho-alpha-D-ribose 1-diphosphate is bound by residues arginine 79, arginine 104, and 131-139; that span reads DPMLATGGS. Residues isoleucine 194 and 199 to 201 contribute to the uracil site; that span reads GDA. Aspartate 200 provides a ligand contact to 5-phospho-alpha-D-ribose 1-diphosphate.

Belongs to the UPRTase family. Mg(2+) is required as a cofactor.

The enzyme catalyses UMP + diphosphate = 5-phospho-alpha-D-ribose 1-diphosphate + uracil. Its pathway is pyrimidine metabolism; UMP biosynthesis via salvage pathway; UMP from uracil: step 1/1. Its activity is regulated as follows. Allosterically activated by GTP. In terms of biological role, catalyzes the conversion of uracil and 5-phospho-alpha-D-ribose 1-diphosphate (PRPP) to UMP and diphosphate. The polypeptide is Uracil phosphoribosyltransferase (Streptococcus sanguinis (strain SK36)).